Consider the following 426-residue polypeptide: Phosphomethylpyrimidine synthase (426 aa).

Substrate contacts are provided by residues N65, M94, Y123, H162, 184-186, 225-228, and E264; these read SRG and DGLR. H268 provides a ligand contact to Zn(2+). Residue Y291 participates in substrate binding. Zn(2+) is bound at residue H332. [4Fe-4S] cluster contacts are provided by C409, C412, and C416.

This sequence belongs to the ThiC family. It depends on [4Fe-4S] cluster as a cofactor.

The catalysed reaction is 5-amino-1-(5-phospho-beta-D-ribosyl)imidazole + S-adenosyl-L-methionine = 4-amino-2-methyl-5-(phosphooxymethyl)pyrimidine + CO + 5'-deoxyadenosine + formate + L-methionine + 3 H(+). It participates in cofactor biosynthesis; thiamine diphosphate biosynthesis. Catalyzes the synthesis of the hydroxymethylpyrimidine phosphate (HMP-P) moiety of thiamine from aminoimidazole ribotide (AIR) in a radical S-adenosyl-L-methionine (SAM)-dependent reaction. This is Phosphomethylpyrimidine synthase from Thermodesulfovibrio yellowstonii (strain ATCC 51303 / DSM 11347 / YP87).